A 115-amino-acid chain; its full sequence is Tyrosine-protein phosphatase 23 (115 aa).

Positions 1–115 (WMMIVEQKCR…EIGGDAPMVV (115 aa)) constitute a Tyrosine-protein phosphatase domain. Asp83 contributes to the substrate binding site.

Belongs to the protein-tyrosine phosphatase family.

It carries out the reaction O-phospho-L-tyrosyl-[protein] + H2O = L-tyrosyl-[protein] + phosphate. In Styela plicata (Wrinkled sea squirt), this protein is Tyrosine-protein phosphatase 23 (STY-23).